We begin with the raw amino-acid sequence, 429 residues long: 3-phosphoshikimate 1-carboxyvinyltransferase (429 aa).

3-phosphoshikimate is bound by residues Lys-23, Ser-24, and Arg-28. Position 23 (Lys-23) interacts with phosphoenolpyruvate. Residues Gly-95 and Arg-123 each coordinate phosphoenolpyruvate. Ser-168, Gln-170, Asp-316, and Lys-343 together coordinate 3-phosphoshikimate. Gln-170 serves as a coordination point for phosphoenolpyruvate. The active-site Proton acceptor is Asp-316. The phosphoenolpyruvate site is built by Arg-347 and Arg-389.

It belongs to the EPSP synthase family. Monomer.

The protein resides in the cytoplasm. It carries out the reaction 3-phosphoshikimate + phosphoenolpyruvate = 5-O-(1-carboxyvinyl)-3-phosphoshikimate + phosphate. It participates in metabolic intermediate biosynthesis; chorismate biosynthesis; chorismate from D-erythrose 4-phosphate and phosphoenolpyruvate: step 6/7. In terms of biological role, catalyzes the transfer of the enolpyruvyl moiety of phosphoenolpyruvate (PEP) to the 5-hydroxyl of shikimate-3-phosphate (S3P) to produce enolpyruvyl shikimate-3-phosphate and inorganic phosphate. The polypeptide is 3-phosphoshikimate 1-carboxyvinyltransferase (Bacillus cereus (strain AH187)).